The following is a 179-amino-acid chain: MTKKVKLDQDEINNKNKNNINNSFCNNKNNNSLNSDLDNLNINLYDNNNNNNNNNNNNNNNNNNNNNNNNNNNNNNNNNNNNNNNYNNFCNGNNNFNEDCNNNDNDENDRYKCNDEFDFRHKKSTRSQSQSSLNSFDQDNKSKDKKVINKTIDIRVGRPHSQPLQPQTQINIQFSKLFI.

Residues 1–14 (MTKKVKLDQDEINN) are compositionally biased toward basic and acidic residues. Disordered regions lie at residues 1-90 (MTKK…NNFC) and 121-147 (HKKSTRSQSQSSLNSFDQDNKSKDKKV). 2 stretches are compositionally biased toward low complexity: residues 15-90 (KNKN…NNFC) and 126-137 (RSQSQSSLNSFD). Over residues 138 to 147 (QDNKSKDKKV) the composition is skewed to basic and acidic residues.

This is an uncharacterized protein from Dictyostelium discoideum (Social amoeba).